Consider the following 591-residue polypeptide: Aspartate--tRNA(Asp/Asn) ligase (591 aa).

Residue Glu174 participates in L-aspartate binding. Positions 198 to 201 (QLFK) are aspartate. Position 220 (Arg220) interacts with L-aspartate. Residues 220–222 (RDE) and Gln229 contribute to the ATP site. His450 serves as a coordination point for L-aspartate. Glu483 contributes to the ATP binding site. Arg490 serves as a coordination point for L-aspartate. ATP is bound at residue 535–538 (GLDR).

It belongs to the class-II aminoacyl-tRNA synthetase family. Type 1 subfamily. As to quaternary structure, homodimer.

It is found in the cytoplasm. It catalyses the reaction tRNA(Asx) + L-aspartate + ATP = L-aspartyl-tRNA(Asx) + AMP + diphosphate. Aspartyl-tRNA synthetase with relaxed tRNA specificity since it is able to aspartylate not only its cognate tRNA(Asp) but also tRNA(Asn). Reaction proceeds in two steps: L-aspartate is first activated by ATP to form Asp-AMP and then transferred to the acceptor end of tRNA(Asp/Asn). The chain is Aspartate--tRNA(Asp/Asn) ligase from Pseudomonas aeruginosa (strain LESB58).